The sequence spans 384 residues: Cytochrome b (384 aa).

4 helical membrane passes run 32 to 52 (FGSL…FLAM), 76 to 98 (WLLR…LHMA), 113 to 133 (LWNM…MGYC), and 179 to 199 (FFSL…LHLL). Residues His82 and His96 each coordinate heme b. Heme b contacts are provided by His183 and His197. His202 lines the a ubiquinone pocket. A run of 4 helical transmembrane segments spans residues 225–245 (FLFK…FLIS), 289–309 (MMGV…PFVD), 321–341 (LSKI…LIGA), and 348–368 (YIII…ILLP).

This sequence belongs to the cytochrome b family. As to quaternary structure, fungal cytochrome b-c1 complex contains 10 subunits; 3 respiratory subunits, 2 core proteins and 5 low-molecular weight proteins. Cytochrome b-c1 complex is a homodimer. Heme b serves as cofactor.

It localises to the mitochondrion inner membrane. Functionally, component of the ubiquinol-cytochrome c reductase complex (complex III or cytochrome b-c1 complex) that is part of the mitochondrial respiratory chain. The b-c1 complex mediates electron transfer from ubiquinol to cytochrome c. Contributes to the generation of a proton gradient across the mitochondrial membrane that is then used for ATP synthesis. The protein is Cytochrome b (COB) of Starmerella bacillaris (Yeast).